The following is a 97-amino-acid chain: Co-chaperonin GroES (97 aa).

Belongs to the GroES chaperonin family. As to quaternary structure, heptamer of 7 subunits arranged in a ring. Interacts with the chaperonin GroEL.

The protein localises to the cytoplasm. Functionally, together with the chaperonin GroEL, plays an essential role in assisting protein folding. The GroEL-GroES system forms a nano-cage that allows encapsulation of the non-native substrate proteins and provides a physical environment optimized to promote and accelerate protein folding. GroES binds to the apical surface of the GroEL ring, thereby capping the opening of the GroEL channel. In Erwinia tasmaniensis (strain DSM 17950 / CFBP 7177 / CIP 109463 / NCPPB 4357 / Et1/99), this protein is Co-chaperonin GroES.